The sequence spans 215 residues: Ribonuclease (215 aa).

The first 22 residues, 1–22 (MKKIVVLLGMLLAPWFSSAVQA), serve as a signal peptide directing secretion. Catalysis depends on residues histidine 62, glutamate 102, and histidine 106. The disordered stretch occupies residues 144 to 166 (KPLPAQGGSGQCQRLAGPGQHHG).

It belongs to the RNase T2 family.

The protein localises to the periplasm. It localises to the cytoplasm. Its function is as follows. One of the few RNases that cleave the phosphodiester bond between any two nucleotide. Shows a preference for adenylic acid. This chain is Ribonuclease, found in Aeromonas hydrophila.